The following is a 456-amino-acid chain: RNA polymerase II-associated protein 1 homolog (456 aa).

Residues 382–456 (LRSVEGSLNE…PVEQLQNEED (75 aa)) form a disordered region. The residue at position 388 (S388) is a Phosphoserine. Positions 396 to 406 (EEKPAESREQL) are enriched in basic and acidic residues. Polar residues-rich tracts occupy residues 408-433 (SAEQ…QANS) and 441-456 (GNTQ…NEED).

It belongs to the PAF1 family.

It localises to the cytoplasm. The protein resides in the nucleus. This chain is RNA polymerase II-associated protein 1 homolog, found in Schizosaccharomyces pombe (strain 972 / ATCC 24843) (Fission yeast).